A 189-amino-acid chain; its full sequence is Hypoxanthine/guanine phosphoribosyltransferase (189 aa).

The protein belongs to the purine/pyrimidine phosphoribosyltransferase family. Archaeal HPRT subfamily. Homodimer.

The protein localises to the cytoplasm. The enzyme catalyses IMP + diphosphate = hypoxanthine + 5-phospho-alpha-D-ribose 1-diphosphate. It catalyses the reaction GMP + diphosphate = guanine + 5-phospho-alpha-D-ribose 1-diphosphate. It functions in the pathway purine metabolism; IMP biosynthesis via salvage pathway; IMP from hypoxanthine: step 1/1. Catalyzes a salvage reaction resulting in the formation of IMP that is energically less costly than de novo synthesis. In Methanosarcina acetivorans (strain ATCC 35395 / DSM 2834 / JCM 12185 / C2A), this protein is Hypoxanthine/guanine phosphoribosyltransferase (hpt).